We begin with the raw amino-acid sequence, 247 residues long: MIKLVLLRHGESQWNLDNRFTGWHDIDLTDKGRREASNAGKLLCEAGFEFDVAYVSVLKRAIRTLWNVLDEMNLMWIPVIRNWRLNERHYGALQGLNKAETAQKYGDEQVLVWRRSYDTPPPPLERTDERWPGSDRRYAALDADEVPLTECLKDTVARFLPFWHETIAPEISKGRNVLIVAHGNSLRALVKYLDGISEEDIVGLNIPTGIPLVYELDDNLKPLKSYYLGDQEELKKAVDAVAGQGKA.

Substrate contacts are provided by residues 8–15 (RHGESQWN), 21–22 (TG), R60, 87–90 (ERHY), K98, 114–115 (RR), and 183–184 (GN). Residue H9 is the Tele-phosphohistidine intermediate of the active site. The Proton donor/acceptor role is filled by E87.

The protein belongs to the phosphoglycerate mutase family. BPG-dependent PGAM subfamily.

The enzyme catalyses (2R)-2-phosphoglycerate = (2R)-3-phosphoglycerate. It functions in the pathway carbohydrate degradation; glycolysis; pyruvate from D-glyceraldehyde 3-phosphate: step 3/5. Its function is as follows. Catalyzes the interconversion of 2-phosphoglycerate and 3-phosphoglycerate. This chain is 2,3-bisphosphoglycerate-dependent phosphoglycerate mutase, found in Chlorobium phaeovibrioides (strain DSM 265 / 1930) (Prosthecochloris vibrioformis (strain DSM 265)).